The following is a 208-amino-acid chain: Large ribosomal subunit protein uL4 (208 aa).

A disordered region spans residues 45–89 (RQGTHAHKNRSAVSGGGKKPWRQKGTGRARQGSTRSPQWRGGGTV).

Belongs to the universal ribosomal protein uL4 family. Part of the 50S ribosomal subunit.

One of the primary rRNA binding proteins, this protein initially binds near the 5'-end of the 23S rRNA. It is important during the early stages of 50S assembly. It makes multiple contacts with different domains of the 23S rRNA in the assembled 50S subunit and ribosome. Its function is as follows. Forms part of the polypeptide exit tunnel. The polypeptide is Large ribosomal subunit protein uL4 (Lactococcus lactis subsp. lactis (strain IL1403) (Streptococcus lactis)).